Consider the following 162-residue polypeptide: Ribosome maturation factor RimM (162 aa).

The region spanning 86–160 (EGRYYYFALI…GIHVDPIPGL (75 aa)) is the PRC barrel domain.

This sequence belongs to the RimM family. Binds ribosomal protein uS19.

The protein localises to the cytoplasm. An accessory protein needed during the final step in the assembly of 30S ribosomal subunit, possibly for assembly of the head region. Essential for efficient processing of 16S rRNA. May be needed both before and after RbfA during the maturation of 16S rRNA. It has affinity for free ribosomal 30S subunits but not for 70S ribosomes. The chain is Ribosome maturation factor RimM from Thermus thermophilus (strain ATCC BAA-163 / DSM 7039 / HB27).